The chain runs to 264 residues: Transmembrane protein 270 (264 aa).

The next 3 helical transmembrane spans lie at 31–51 (HLYR…LGLA), 74–94 (LSLA…LLLW), and 133–153 (LFLS…LLTW). Polar residues predominate over residues 227–236 (AQEVKSQETS). Positions 227–264 (AQEVKSQETSGPPPQFLIPESSTTESGPLPPQPETPGE) are disordered. Over residues 254-264 (PLPPQPETPGE) the composition is skewed to pro residues.

In terms of tissue distribution, testis.

It localises to the membrane. This is Transmembrane protein 270 from Mus musculus (Mouse).